The primary structure comprises 184 residues: Cell division protein ZapC (184 aa).

This sequence belongs to the ZapC family. As to quaternary structure, interacts directly with FtsZ.

The protein localises to the cytoplasm. In terms of biological role, contributes to the efficiency of the cell division process by stabilizing the polymeric form of the cell division protein FtsZ. Acts by promoting interactions between FtsZ protofilaments and suppressing the GTPase activity of FtsZ. In Idiomarina loihiensis (strain ATCC BAA-735 / DSM 15497 / L2-TR), this protein is Cell division protein ZapC.